The chain runs to 139 residues: Small ribosomal subunit protein eS6 (139 aa).

It belongs to the eukaryotic ribosomal protein eS6 family.

This Methanosarcina barkeri (strain Fusaro / DSM 804) protein is Small ribosomal subunit protein eS6.